The primary structure comprises 802 residues: Copper-exporting P-type ATPase (802 aa).

2 HMA domains span residues 5-70 (KKTT…YGVA) and 72-138 (ETVE…YDAS). Cu(+) contacts are provided by Cys-16, Cys-19, Cys-83, and Cys-86. 6 helical membrane-spanning segments follow: residues 161–181 (LIISAVLSLPLLMLMFVHLFN), 192–212 (WFQFILATPVQFIIGWQFYVG), 224–244 (MDVLVAVGTSAAYFYSIYEMV), 256–276 (LYFETSAVLITLILFGKYLEA), 411–431 (YFVPIVVGIALLTFIVWITLV), and 438–458 (PALVASISVLVIACPCALGLA). Asp-495 functions as the 4-aspartylphosphate intermediate in the catalytic mechanism. The Mg(2+) site is built by Asp-690 and Asp-694. The next 2 helical transmembrane spans lie at 748–767 (LFWAFGYNIAGIPIAALGLL) and 771–790 (VAGAAMALSSVSVVTNALRL).

It belongs to the cation transport ATPase (P-type) (TC 3.A.3) family. Type IB subfamily.

The protein localises to the cell membrane. The catalysed reaction is Cu(+)(in) + ATP + H2O = Cu(+)(out) + ADP + phosphate + H(+). Involved in copper export. In Staphylococcus aureus (strain COL), this protein is Copper-exporting P-type ATPase (copA).